Here is a 48-residue protein sequence, read N- to C-terminus: Small ribosomal subunit protein uS14 (48 aa).

Positions 13, 16, 31, and 34 each coordinate Zn(2+).

It belongs to the universal ribosomal protein uS14 family. Zinc-binding uS14 subfamily. In terms of assembly, part of the 30S ribosomal subunit. It depends on Zn(2+) as a cofactor.

Binds 16S rRNA, required for the assembly of 30S particles. The sequence is that of Small ribosomal subunit protein uS14 from Methanopyrus kandleri (strain AV19 / DSM 6324 / JCM 9639 / NBRC 100938).